The following is a 34-amino-acid chain: Potassium channel toxin alpha-KTx 6.17 (34 aa).

Intrachain disulfides connect Cys-3/Cys-24, Cys-9/Cys-29, Cys-13/Cys-31, and Cys-19/Cys-34.

The protein belongs to the short scorpion toxin superfamily. Potassium channel inhibitor family. Alpha-KTx 06 subfamily. Expressed by the venom gland.

The protein localises to the secreted. Its function is as follows. This toxin reversibly blocks Shaker B potassium-channels (expressed in insect Sf9 cells) with a Kd of 96.6 nM, and presents an even better affinity toward hKv1.3 (KCNA3), blocking it with a Kd of 17.7 nM. The protein is Potassium channel toxin alpha-KTx 6.17 of Opisthacanthus cayaporum (South American scorpion).